A 286-amino-acid polypeptide reads, in one-letter code: Beta-lactamase SHV-24 (286 aa).

The signal sequence occupies residues 1 to 21 (MRYIRLCIISLLATLPLAVHA). Ser66 functions as the Acyl-ester intermediate in the catalytic mechanism. Cys73 and Cys119 are oxidised to a cystine. The active-site Proton acceptor is Glu164. A substrate-binding site is contributed by 230 to 232 (KTG).

The protein belongs to the class-A beta-lactamase family.

The enzyme catalyses a beta-lactam + H2O = a substituted beta-amino acid. Its function is as follows. Hydrolyzes ampicillin. Can also hydrolyze cephaloridine, aztreonam and ceftazidime with a low catalytic rate. The sequence is that of Beta-lactamase SHV-24 (bla) from Escherichia coli.